The chain runs to 288 residues: Mortality factor 4-like protein 2 (288 aa).

Polar residues predominate over residues 1 to 15 (MSSRKQGSQPRGQQS). The disordered stretch occupies residues 1–113 (MSSRKQGSQP…RADPTVESEE (113 aa)). The residue at position 71 (serine 71) is a Phosphoserine. One can recognise an MRG domain in the interval 117–288 (NRMEVKVKIP…ASAEYHRKAL (172 aa)).

In terms of assembly, component of the NuA4 histone acetyltransferase complex which contains the catalytic subunit KAT5/TIP60 and the subunits EP400, TRRAP/PAF400, BRD8/SMAP, EPC1, DMAP1/DNMAP1, RUVBL1/TIP49, RUVBL2, ING3, actin, ACTL6A/BAF53A, MORF4L1/MRG15, MORF4L2/MRGX, MRGBP, YEATS4/GAS41 and VPS72/YL1. The NuA4 complex interacts with MYC and the adenovirus E1A protein. MORF4L1 may also participate in the formation of NuA4 related complexes which lack the KAT5/TIP60 catalytic subunit, but which include the SWI/SNF related protein SRCAP. Component of the MSIN3A histone deacetylase complex, which includes SIN3A, HDAC2, ARID4B, MORF4L1, RBBP4/RbAp48, and RBBP7/RbAp46. Interacts with MRFAP1 and RB1. May also interact with one or more as yet undefined members of the TLE (transducin-like enhancer of split) family of transcriptional repressors.

The protein localises to the nucleus. Functionally, component of the NuA4 histone acetyltransferase complex which is involved in transcriptional activation of select genes principally by acetylation of nucleosomal histone H4 and H2A. This modification may both alter nucleosome - DNA interactions and promote interaction of the modified histones with other proteins which positively regulate transcription. This complex may be required for the activation of transcriptional programs associated with oncogene and proto-oncogene mediated growth induction, tumor suppressor mediated growth arrest and replicative senescence, apoptosis, and DNA repair. The NuA4 complex ATPase and helicase activities seem to be, at least in part, contributed by the association of RUVBL1 and RUVBL2 with EP400. NuA4 may also play a direct role in DNA repair when directly recruited to sites of DNA damage. Also a component of the MSIN3A complex which acts to repress transcription by deacetylation of nucleosomal histones. This Macaca fascicularis (Crab-eating macaque) protein is Mortality factor 4-like protein 2 (MORF4L2).